The following is a 1174-amino-acid chain: Lysylphosphatidylglycerol biosynthesis bifunctional protein LysX (1174 aa).

The segment at 1–665 (MGVGLHLTVP…LLHHDGSAPD (665 aa)) is phosphatidylglycerol lysyltransferase. The tract at residues 9–36 (VPGLRRDGRGVQSNSHDTSSKTTADISR) is disordered. Residues 19 to 33 (VQSNSHDTSSKTTAD) show a composition bias toward polar residues. The next 7 membrane-spanning stretches (helical) occupy residues 82–102 (VPAAAGWTVGVIATLSLLASV), 124–144 (FPDTNFAWSFVLALLAAALTA), 148–168 (IAWLVLLANMVLAAVVNAAEI), 179–199 (FGENLGFAVHVVAIVVLVLGY), 216–236 (AVWLAGAVVGIVASWGLVELF), 274–294 (AIFGLFGAFALIGAAIVLFLS), and 614–634 (VIPRVGVASVIAEGFLVLPFS). The lysine--tRNA ligase stretch occupies residues 666 to 1174 (VSGLRQVGLT…TLPFPLAKPH (509 aa)). A DNA-binding region (OB) is located at residues 728 to 806 (VSVSGRIMRI…SLIVSGWRLI (79 aa)). 2 residues coordinate Mg(2+): aspartate 1086 and glutamate 1093.

The protein in the N-terminal section; belongs to the LPG synthetase family. This sequence in the C-terminal section; belongs to the class-II aminoacyl-tRNA synthetase family. Mg(2+) serves as cofactor.

The protein resides in the cell membrane. The enzyme catalyses tRNA(Lys) + L-lysine + ATP = L-lysyl-tRNA(Lys) + AMP + diphosphate. It catalyses the reaction L-lysyl-tRNA(Lys) + a 1,2-diacyl-sn-glycero-3-phospho-(1'-sn-glycerol) = a 1,2-diacyl-sn-glycero-3-phospho-1'-(3'-O-L-lysyl)-sn-glycerol + tRNA(Lys). Catalyzes the production of L-lysyl-tRNA(Lys)transfer and the transfer of a lysyl group from L-lysyl-tRNA(Lys) to membrane-bound phosphatidylglycerol (PG), which produces lysylphosphatidylglycerol (LPG), one of the components of the bacterial membrane with a positive net charge. LPG synthesis contributes to the resistance to cationic antimicrobial peptides (CAMPs) and likely protects M.tuberculosis against the CAMPs produced by competiting microorganisms (bacteriocins). In fact, the modification of anionic phosphatidylglycerol with positively charged L-lysine results in repulsion of the peptides. The sequence is that of Lysylphosphatidylglycerol biosynthesis bifunctional protein LysX (lysX) from Mycobacterium tuberculosis (strain KZN 1435 / MDR).